The primary structure comprises 117 residues: Hemerythrin subunit alpha (117 aa).

Fe cation contacts are provided by H24, H53, E57, H72, H76, H105, and D110.

Belongs to the hemerythrin family. In terms of assembly, octamer composed of two types of chains: alpha and beta.

In terms of biological role, hemerythrin is a respiratory protein in blood cells of certain marine worms. The oxygen-binding site in each chain contains two iron atoms. In Lingula reevii (Inarticulated brachiopod), this protein is Hemerythrin subunit alpha.